The sequence spans 324 residues: Acetyl-coenzyme A carboxylase carboxyl transferase subunit alpha (324 aa).

The 255-residue stretch at Lys-37–Arg-291 folds into the CoA carboxyltransferase C-terminal domain.

It belongs to the AccA family. As to quaternary structure, acetyl-CoA carboxylase is a heterohexamer composed of biotin carboxyl carrier protein (AccB), biotin carboxylase (AccC) and two subunits each of ACCase subunit alpha (AccA) and ACCase subunit beta (AccD).

The protein localises to the cytoplasm. It catalyses the reaction N(6)-carboxybiotinyl-L-lysyl-[protein] + acetyl-CoA = N(6)-biotinyl-L-lysyl-[protein] + malonyl-CoA. It functions in the pathway lipid metabolism; malonyl-CoA biosynthesis; malonyl-CoA from acetyl-CoA: step 1/1. Component of the acetyl coenzyme A carboxylase (ACC) complex. First, biotin carboxylase catalyzes the carboxylation of biotin on its carrier protein (BCCP) and then the CO(2) group is transferred by the carboxyltransferase to acetyl-CoA to form malonyl-CoA. This chain is Acetyl-coenzyme A carboxylase carboxyl transferase subunit alpha, found in Chlamydia caviae (strain ATCC VR-813 / DSM 19441 / 03DC25 / GPIC) (Chlamydophila caviae).